The chain runs to 315 residues: Methionyl-tRNA formyltransferase (315 aa).

113-116 serves as a coordination point for (6S)-5,6,7,8-tetrahydrofolate; sequence SILP.

Belongs to the Fmt family.

The enzyme catalyses L-methionyl-tRNA(fMet) + (6R)-10-formyltetrahydrofolate = N-formyl-L-methionyl-tRNA(fMet) + (6S)-5,6,7,8-tetrahydrofolate + H(+). Attaches a formyl group to the free amino group of methionyl-tRNA(fMet). The formyl group appears to play a dual role in the initiator identity of N-formylmethionyl-tRNA by promoting its recognition by IF2 and preventing the misappropriation of this tRNA by the elongation apparatus. The protein is Methionyl-tRNA formyltransferase of Vibrio cholerae serotype O1 (strain M66-2).